The primary structure comprises 568 residues: uncharacterized protein (568 aa).

The segment covering D334–I346 has biased composition (basic and acidic residues). 2 disordered regions span residues D334–N382 and Q436–N479. Over residues K458–C477 the composition is skewed to low complexity.

It to yeast YJL043w.

This is an uncharacterized protein from Saccharomyces cerevisiae (strain ATCC 204508 / S288c) (Baker's yeast).